The chain runs to 196 residues: Cell division protein SepF (196 aa).

Residues 15 to 80 (VEDDEEFNEP…PKRSASTFSK (66 aa)) are disordered. Low complexity predominate over residues 57–72 (PAQTTPKPQTQTAAPK).

It belongs to the SepF family. Homodimer. Interacts with FtsZ.

It is found in the cytoplasm. Functionally, cell division protein that is part of the divisome complex and is recruited early to the Z-ring. Probably stimulates Z-ring formation, perhaps through the cross-linking of FtsZ protofilaments. Its function overlaps with FtsA. This chain is Cell division protein SepF, found in Lactococcus lactis subsp. cremoris (strain MG1363).